Consider the following 303-residue polypeptide: tRNA pseudouridine synthase B (303 aa).

Asp53 (nucleophile) is an active-site residue.

Belongs to the pseudouridine synthase TruB family. Type 1 subfamily.

It carries out the reaction uridine(55) in tRNA = pseudouridine(55) in tRNA. In terms of biological role, responsible for synthesis of pseudouridine from uracil-55 in the psi GC loop of transfer RNAs. This Zymomonas mobilis subsp. mobilis (strain ATCC 31821 / ZM4 / CP4) protein is tRNA pseudouridine synthase B.